Reading from the N-terminus, the 537-residue chain is Probable feruloyl esterase ARB_07085 (537 aa).

The signal sequence occupies residues 1-22 (MVTLPLLLSILPLAAVFSSAAS). Residues N67, N76, and N189 are each glycosylated (N-linked (GlcNAc...) asparagine). 3 disulfide bridges follow: C196–C459, C263–C280, and C508–C529. S197 acts as the Acyl-ester intermediate in catalysis. Positions 264, 267, 269, 271, and 273 each coordinate Ca(2+). A glycan (N-linked (GlcNAc...) asparagine) is linked at N339. Active-site charge relay system residues include D419 and H458.

It belongs to the tannase family.

The protein localises to the secreted. The enzyme catalyses feruloyl-polysaccharide + H2O = ferulate + polysaccharide.. In terms of biological role, hydrolyzes the feruloyl-arabinose ester bond in arabinoxylans as well as the feruloyl-galactose and feruloyl-arabinose ester bonds. The protein is Probable feruloyl esterase ARB_07085 of Arthroderma benhamiae (strain ATCC MYA-4681 / CBS 112371) (Trichophyton mentagrophytes).